Reading from the N-terminus, the 515-residue chain is Zinc-binding protein AdcA (515 aa).

Residues 1-28 (MKKKILLMMSLISVFFAWQLTQAKQVLA) form the signal peptide. Histidine 66 serves as a coordination point for Zn(2+). Residues 126–148 (HHHEEADKKHEHNKHSEEGHNHA) are disordered. Residues 129–148 (EEADKKHEHNKHSEEGHNHA) form a his-rich loop region. The Zn(2+) site is built by histidine 152, histidine 216, and glutamate 291.

Belongs to the bacterial solute-binding protein 9 family.

Functionally, part of the ATP-binding cassette (ABC) transport system AdcABC involved in zinc import. Binds zinc with high affinity and specificity and delivers it to the membrane permease for translocation into the cytoplasm. This is Zinc-binding protein AdcA (adcA) from Streptococcus pyogenes serotype M3 (strain ATCC BAA-595 / MGAS315).